A 340-amino-acid polypeptide reads, in one-letter code: Guanine nucleotide-binding protein G(I)/G(S)/G(T) subunit beta-1 (340 aa).

Serine 2 is modified (N-acetylserine). Position 2 is a phosphoserine (serine 2). WD repeat units follow at residues arginine 46 to proline 94, leucine 95 to alanine 140, glycine 141 to threonine 181, glycine 182 to threonine 223, glycine 224 to aspartate 267, asparagine 268 to alanine 309, and glycine 310 to asparagine 340. At histidine 266 the chain carries Phosphohistidine.

The protein belongs to the WD repeat G protein beta family. G proteins are composed of 3 units, alpha, beta and gamma. The heterodimer formed by GNB1 and GNG2 interacts with ARHGEF5. The heterodimer formed by GNB1 and GNG2 interacts with GRK2. Forms a complex with GNAO1 and GNG3. Interacts with ARHGEF18 and RASD2. Forms complexes with TAS2R14 and G-proteins; these complexes play a role in the perception of bitterness. Component of the TAS2R14-GNAI1 complex, consisting of TAS2R14, GNAI1, GNB1 and GNG2. Component of the TAS2R14-GNAT3 complex, consisting of TAS2R14, GNAT3, GNB1 and GNG2. Component of the TAS2R14-GNAS2 complex, consisting of TAS2R14, GNAS2, GNB1 and GNG2. Phosphorylation at His-266 by NDKB contributes to G protein activation by increasing the high energetic phosphate transfer onto GDP.

In terms of biological role, guanine nucleotide-binding proteins (G proteins) are involved as a modulator or transducer in various transmembrane signaling systems. The beta and gamma chains are required for the GTPase activity, for replacement of GDP by GTP, and for G protein-effector interaction. This is Guanine nucleotide-binding protein G(I)/G(S)/G(T) subunit beta-1 (GNB1) from Pongo abelii (Sumatran orangutan).